Here is a 419-residue protein sequence, read N- to C-terminus: MNLTALKNIPVSELIFLGDNAGLENLARMRKQDIIFSILKQHAKSGEDIFGDGVLEILQDGFGFLRSSDSSYLAGPDDIYVSPSQIRRFNLRTGDTISGKIRPPKEGERYFALLKVNKVNYDKPENARSKILFENLTPLHANSRLRMERGNGSTEDLTARVLDLASPIGRGQRGLIVAPPKAGKTMLLQNIAQSIAYNHPDCVLMVLLIDERPEEVTEMRRLVKGEVVASTFDEPSSRHVQVSEMVIEKAKRLVEHKKDVIILLDSITRLARAYNTVVPASGKVLTGGVDANALHRPKRFFGAARNVEEGGSLTIIATALIDTGSKMDEVIYEEFKGTGNMELPLSRKIAEKRVFPAIDYNRSGTRKEELLTKSDELQKMWILRKIIHPMSEIDAMEFLINKLAMTKTNNEFFDMMKRS.

Residues 48 to 123 (DIFGDGVLEI…LKVNKVNYDK (76 aa)) enclose the Rho RNA-BD domain. 3 RNA-binding regions span residues 61–66 (GFGFLR), 78–80 (DIY), and 108–110 (ERY). ATP-binding positions include 169–174 (GRGQRG), 181–186 (KAGKTM), and Arg-212. An RNA-binding 2 region spans residues 284–288 (VLTGG).

It belongs to the Rho family. In terms of assembly, homohexamer. The homohexamer assembles into an open ring structure.

In terms of biological role, facilitates transcription termination by a mechanism that involves Rho binding to the nascent RNA, activation of Rho's RNA-dependent ATPase activity, and release of the mRNA from the DNA template. The chain is Transcription termination factor Rho from Buchnera aphidicola subsp. Baizongia pistaciae (strain Bp).